We begin with the raw amino-acid sequence, 267 residues long: Glutamate 5-kinase (267 aa).

ATP is bound at residue K14. Substrate is bound by residues S54, D141, and N157. ATP-binding positions include 177 to 178 and 219 to 225; these read SD and TGGMMSK.

The protein belongs to the glutamate 5-kinase family.

Its subcellular location is the cytoplasm. It carries out the reaction L-glutamate + ATP = L-glutamyl 5-phosphate + ADP. It participates in amino-acid biosynthesis; L-proline biosynthesis; L-glutamate 5-semialdehyde from L-glutamate: step 1/2. In terms of biological role, catalyzes the transfer of a phosphate group to glutamate to form L-glutamate 5-phosphate. The polypeptide is Glutamate 5-kinase (Streptococcus thermophilus).